The following is a 593-amino-acid chain: Probable translation initiation factor IF-2 (593 aa).

The tr-type G domain maps to 7–221; the sequence is IRTPIVCVMG…VLIGLAQRYM (215 aa). Residues 16 to 23 are G1; that stretch reads GHVDHGKT. Residue 16–23 coordinates GTP; it reads GHVDHGKT. Residues 41–45 are G2; that stretch reads EITQH. A G3 region spans residues 77-80; sequence DTPG. Residues 77 to 81 and 131 to 134 each bind GTP; these read DTPGH and NKVD. The tract at residues 131–134 is G4; that stretch reads NKVD. The G5 stretch occupies residues 199 to 201; sequence SAL.

The protein belongs to the TRAFAC class translation factor GTPase superfamily. Classic translation factor GTPase family. IF-2 subfamily.

Functionally, function in general translation initiation by promoting the binding of the formylmethionine-tRNA to ribosomes. Seems to function along with eIF-2. The protein is Probable translation initiation factor IF-2 of Methanoculleus marisnigri (strain ATCC 35101 / DSM 1498 / JR1).